Consider the following 418-residue polypeptide: Protein FAM53A (418 aa).

2 disordered regions span residues Thr-198 to Arg-236 and Glu-248 to Arg-269. Residues Ser-205–Gly-229 are compositionally biased toward low complexity. A compositionally biased stretch (polar residues) spans Glu-248–Glu-265. Residues Lys-285–Arg-293 carry the Nuclear localization signal motif.

This sequence belongs to the FAM53 family.

Its subcellular location is the nucleus. Functionally, may play an important role in neural development; the dorsomedial roof of the third ventricle. This Gallus gallus (Chicken) protein is Protein FAM53A.